A 524-amino-acid polypeptide reads, in one-letter code: uncharacterized protein (524 aa).

Positions 83–101 (NSTPSKQAKPLQRNSPYQG) are enriched in polar residues. 2 disordered regions span residues 83–108 (NSTP…SENQ) and 155–179 (PPCN…KRPR).

The protein resides in the cytoplasm. This is an uncharacterized protein from Saccharomyces cerevisiae (strain ATCC 204508 / S288c) (Baker's yeast).